A 237-amino-acid polypeptide reads, in one-letter code: Carboxy-S-adenosyl-L-methionine synthase (237 aa).

Residues Tyr-36, 61-63, 86-87, 112-113, Asn-127, and Arg-194 each bind S-adenosyl-L-methionine; these read GAS, DN, and DI.

This sequence belongs to the class I-like SAM-binding methyltransferase superfamily. Cx-SAM synthase family. As to quaternary structure, homodimer.

It catalyses the reaction prephenate + S-adenosyl-L-methionine = carboxy-S-adenosyl-L-methionine + 3-phenylpyruvate + H2O. Catalyzes the conversion of S-adenosyl-L-methionine (SAM) to carboxy-S-adenosyl-L-methionine (Cx-SAM). The polypeptide is Carboxy-S-adenosyl-L-methionine synthase (Ruthia magnifica subsp. Calyptogena magnifica).